The primary structure comprises 681 residues: 2-(S-pantetheinyl)-carbapenam-3-carboxylate methyltransferase (681 aa).

In terms of domain architecture, B12-binding spans 1–144; it reads MTVPAARSGR…IERLADHPDY (144 aa). The cob(II)alamin site is built by Asn18, Ser72, Tyr74, Val75, His103, Gly126, and Glu127. A Radical SAM core domain is found at 192–417; the sequence is RDLRFYALWE…RLYVEEPGTP (226 aa). The [4Fe-4S] cluster site is built by Cys206 and Cys210. A 5'-deoxyadenosine-binding site is contributed by Phe212. Residue Cys213 participates in [4Fe-4S] cluster binding. Positions 214 and 249 each coordinate cob(II)alamin. 5'-deoxyadenosine contacts are provided by Gln312, Glu349, and Gly384.

Belongs to the methyltransferase superfamily. [4Fe-4S] cluster is required as a cofactor. It depends on cob(II)alamin as a cofactor.

It catalyses the reaction (2R,3R,5S)-2-(S-pantetheinyl)-carbapenam-3-carboxylate + AH2 + 2 S-adenosyl-L-methionine = (2R,3R,5S,6R)-6-(methyl)-2-(S-pantetheinyl)-carbapenam-3-carboxylate + 5'-deoxyadenosine + L-methionine + A + S-adenosyl-L-homocysteine + 2 H(+). The enzyme catalyses (2R,3R,5S,6R)-6-(methyl)-2-(S-pantetheinyl)-carbapenam-3-carboxylate + AH2 + 2 S-adenosyl-L-methionine = (2R,3R,5S,6R)-6-(ethyl)-2-(S-pantetheinyl)-carbapenam-3-carboxylate + 5'-deoxyadenosine + L-methionine + A + S-adenosyl-L-homocysteine + 2 H(+). Its pathway is antibiotic biosynthesis. Methyltransferase involved in the biosynthesis of the beta-lactam carbapenem antibiotic thienamycin. Catalyzes two consecutive S-adenosyl-L-methionine-dependent methylations to build out the C6-ethyl side chain in a stereocontrolled manner. In vitro can use methyl viologen and NADPH as the iron-sulfur cluster reductants. The protein is 2-(S-pantetheinyl)-carbapenam-3-carboxylate methyltransferase of Streptantibioticus cattleyicolor (strain ATCC 35852 / DSM 46488 / JCM 4925 / NBRC 14057 / NRRL 8057) (Streptomyces cattleya).